Consider the following 349-residue polypeptide: Ribosomal RNA large subunit methyltransferase Cfr (349 aa).

Residue glutamate 89 is the Proton acceptor of the active site. Residues 96-331 enclose the Radical SAM core domain; sequence KAGWESFCIS…VTVRSQFGID (236 aa). Residues cysteine 103 and cysteine 336 are joined by a disulfide bond. 3 residues coordinate [4Fe-4S] cluster: cysteine 110, cysteine 114, and cysteine 117. S-adenosyl-L-methionine contacts are provided by residues 156–157, serine 187, 210–212, and asparagine 291; these read GE and SLH. Cysteine 336 serves as the catalytic S-methylcysteine intermediate.

This sequence belongs to the radical SAM superfamily. RlmN family. Cfr subfamily. [4Fe-4S] cluster is required as a cofactor.

Its subcellular location is the cytoplasm. It catalyses the reaction adenosine(2503) in 23S rRNA + 2 reduced [2Fe-2S]-[ferredoxin] + 2 S-adenosyl-L-methionine = 8-methyladenosine(2503) in 23S rRNA + 5'-deoxyadenosine + L-methionine + 2 oxidized [2Fe-2S]-[ferredoxin] + S-adenosyl-L-homocysteine. Functionally, specifically methylates position 8 of adenine 2503 in 23S rRNA. Confers resistance to some classes of antibiotics. The protein is Ribosomal RNA large subunit methyltransferase Cfr of Bacillus velezensis (strain DSM 23117 / BGSC 10A6 / LMG 26770 / FZB42) (Bacillus amyloliquefaciens subsp. plantarum).